The chain runs to 320 residues: Pyrroline-5-carboxylate reductase 2 (320 aa).

Residue S2 is modified to N-acetylserine. Residues 6-11 and S34 contribute to the NADP(+) site; that span reads IGAGQL. A8, Q10, L11, S34, E36, N56, V70, K71, and A97 together coordinate NADPH. Residues N56, 69 to 72, and 95 to 97 contribute to the NADP(+) site; these read AVKP and CAA. E164 contributes to the L-proline binding site. N230 provides a ligand contact to NADPH. The L-proline site is built by A237 and T238. Residues 298-320 form a disordered region; it reads TTLTPTSSGKLLTRSPVPGGKKD. Residue S304 is modified to Phosphoserine.

It belongs to the pyrroline-5-carboxylate reductase family. Homodecamer; composed of 5 homodimers. Interacts with LTO1.

Its subcellular location is the cytoplasm. The protein localises to the mitochondrion. The catalysed reaction is L-proline + NADP(+) = (S)-1-pyrroline-5-carboxylate + NADPH + 2 H(+). It catalyses the reaction L-proline + NAD(+) = (S)-1-pyrroline-5-carboxylate + NADH + 2 H(+). It functions in the pathway amino-acid biosynthesis; L-proline biosynthesis; L-proline from L-glutamate 5-semialdehyde: step 1/1. In terms of biological role, oxidoreductase that catalyzes the last step in proline biosynthesis, which corresponds to the reduction of pyrroline-5-carboxylate to L-proline using NAD(P)H. At physiologic concentrations, has higher specific activity in the presence of NADH. Involved in cellular response to oxidative stress. In some cell types, such as erythrocytes, its primary function may be the generation of NADP(+). The polypeptide is Pyrroline-5-carboxylate reductase 2 (PYCR2) (Bos taurus (Bovine)).